The sequence spans 478 residues: PRAME family member 4 (478 aa).

One copy of the LRR 1; degenerate repeat lies at 99 to 126; sequence RWKLQVLDLQDVCENFWMVWSEAMAHGC. One copy of the LRR 2; degenerate repeat lies at 181–205; it reads HLCCKKLKILGMPFRNIRSILKMVN. An LRR 3; degenerate repeat occupies 206 to 232; that stretch reads LDCIQEVEVNCKWVLPILTQFTPYLGH. An LRR 4; degenerate repeat occupies 233–268; that stretch reads MRNLQKLILSHMDVSRYVSPEQKKEIVTQFTTQFLK. LRR repeat units lie at residues 269-294, 295-326, 327-347, 351-378, and 379-403; these read LRCLQKLYMNSVSFLEGHLDQLLSCL, KTSLKFLTITNCVLLESDLKHLSQCPSISQLK, TLDLSGIRLTNYSLVPLQILL, AATLEYLDLDDCGIIDSQVNAILPALSR, and CFELNTFSFCGNPICMATLENLLSH.

Belongs to the PRAME family.

This chain is PRAME family member 4, found in Homo sapiens (Human).